The sequence spans 199 residues: N-(5'-phosphoribosyl)anthranilate isomerase (199 aa).

The protein belongs to the TrpF family.

It carries out the reaction N-(5-phospho-beta-D-ribosyl)anthranilate = 1-(2-carboxyphenylamino)-1-deoxy-D-ribulose 5-phosphate. It participates in amino-acid biosynthesis; L-tryptophan biosynthesis; L-tryptophan from chorismate: step 3/5. The protein is N-(5'-phosphoribosyl)anthranilate isomerase of Streptococcus pneumoniae (strain Taiwan19F-14).